Reading from the N-terminus, the 167-residue chain is Aphrodisin (167 aa).

The signal sequence occupies residues 1–16; it reads MVKILVLALVFSLAHA. At Gln-17 the chain carries Pyrrolidone carboxylic acid. 2 disulfides stabilise this stretch: Cys-54-Cys-58 and Cys-73-Cys-165. Asn-57 and Asn-85 each carry an N-linked (GlcNAc...) asparagine glycan.

It belongs to the calycin superfamily. Lipocalin family. Expressed in the vagina, uterus, and Bartholin's glands of female hamsters. Secreted in vaginal discharge.

Its subcellular location is the secreted. Functionally, acts as an aphrodisiac pheromone, reliably eliciting copulatory behavior from male hamster. The sequence is that of Aphrodisin from Mesocricetus auratus (Golden hamster).